The chain runs to 285 residues: 4-diphosphocytidyl-2-C-methyl-D-erythritol kinase (285 aa).

Lys-12 is a catalytic residue. Residue 95 to 105 participates in ATP binding; it reads PMGGGVGGGSS. Asp-137 is a catalytic residue.

Belongs to the GHMP kinase family. IspE subfamily.

It catalyses the reaction 4-CDP-2-C-methyl-D-erythritol + ATP = 4-CDP-2-C-methyl-D-erythritol 2-phosphate + ADP + H(+). Its pathway is isoprenoid biosynthesis; isopentenyl diphosphate biosynthesis via DXP pathway; isopentenyl diphosphate from 1-deoxy-D-xylulose 5-phosphate: step 3/6. Functionally, catalyzes the phosphorylation of the position 2 hydroxy group of 4-diphosphocytidyl-2C-methyl-D-erythritol. This chain is 4-diphosphocytidyl-2-C-methyl-D-erythritol kinase, found in Actinobacillus pleuropneumoniae serotype 3 (strain JL03).